The chain runs to 440 residues: Xylose isomerase (440 aa).

Catalysis depends on residues H101 and D104. 7 residues coordinate Mg(2+): E232, E268, H271, D296, D307, D309, and D339.

Belongs to the xylose isomerase family. As to quaternary structure, homotetramer. Mg(2+) serves as cofactor.

The protein resides in the cytoplasm. The catalysed reaction is alpha-D-xylose = alpha-D-xylulofuranose. This Escherichia coli (strain SE11) protein is Xylose isomerase.